Consider the following 364-residue polypeptide: Triacylglycerol lipase (364 aa).

The signal sequence occupies residues 1-44 (MARTMRSRVVAGAVACAMSIAPFAGTTAVMTLATTHAAMAATAP). The 213-residue stretch at 54–266 (PIILVHGLSG…AIQPTLSVFG (213 aa)) folds into the AB hydrolase-1 domain. Position 61 (Leu-61) interacts with substrate. Ser-131 (nucleophile) is an active-site residue. Gln-132 is a substrate binding site. Cys-234 and Cys-314 are oxidised to a cystine. Asp-286 is a binding site for Ca(2+). Active-site charge relay system residues include Asp-308 and His-330. Positions 332, 336, and 340 each coordinate Ca(2+).

This sequence belongs to the AB hydrolase superfamily. Pseudomonas lipase family. As to quaternary structure, monomer. It depends on Ca(2+) as a cofactor.

The protein resides in the secreted. The enzyme catalyses a triacylglycerol + H2O = a diacylglycerol + a fatty acid + H(+). Inhibited by RC-(Rp,Sp)- and SC-(Rp,Sp)-1,2-dioctylcarbamoylglycero-3-O-p-nitrophenyl octylphosphonate. Also inhibited by diethyl-p-nitrophenylphosphate (E600). In terms of biological role, catalyzes the hydrolysis of triacylglycerol. It shows a preference for triacylglycerols with a chain length between 6 and 12 carbons. This chain is Triacylglycerol lipase, found in Burkholderia cepacia (Pseudomonas cepacia).